Consider the following 472-residue polypeptide: Chitobiosyldiphosphodolichol beta-mannosyltransferase (472 aa).

Residues 1–20 are Lumenal-facing; it reads MEEFQFIKYKGFDHVFKYSG. The chain crosses the membrane as a helical span at residues 21-41; sequence PWLWWLVGFYLCLPILAYTLL. Residues 42-118 lie on the Cytoplasmic side of the membrane; that stretch reads PYLTMNGTIS…PITVTKNTSN (77 aa). An intramembrane region (helical) is located at residues 119–139; the sequence is LPFILFAAKKMVVQFFQLLKL. The Cytoplasmic segment spans residues 140–472; it reads LSDFRGTDYV…MGKRFEYSTD (333 aa).

Belongs to the glycosyltransferase group 1 family.

It localises to the endoplasmic reticulum membrane. The enzyme catalyses an N,N'-diacetylchitobiosyl-diphospho-di-trans,poly-cis-dolichol + GDP-alpha-D-mannose = a beta-D-Man-(1-&gt;4)-beta-D-GlcNAc-(1-&gt;4)-alpha-D-GlcNAc-diphospho-di-trans,poly-cis-dolichol + GDP + H(+). The protein operates within protein modification; protein glycosylation. Functionally, participates in the formation of the lipid-linked precursor oligosaccharide for N-glycosylation. Involved in assembling the dolichol-pyrophosphate-GlcNAc(2)-Man(5) intermediate on the cytoplasmic surface of the ER. This Debaryomyces hansenii (strain ATCC 36239 / CBS 767 / BCRC 21394 / JCM 1990 / NBRC 0083 / IGC 2968) (Yeast) protein is Chitobiosyldiphosphodolichol beta-mannosyltransferase (ALG1).